A 487-amino-acid polypeptide reads, in one-letter code: Proline--tRNA ligase (487 aa).

It belongs to the class-II aminoacyl-tRNA synthetase family. ProS type 3 subfamily. In terms of assembly, homodimer.

It localises to the cytoplasm. The catalysed reaction is tRNA(Pro) + L-proline + ATP = L-prolyl-tRNA(Pro) + AMP + diphosphate. In terms of biological role, catalyzes the attachment of proline to tRNA(Pro) in a two-step reaction: proline is first activated by ATP to form Pro-AMP and then transferred to the acceptor end of tRNA(Pro). The sequence is that of Proline--tRNA ligase from Pyrobaculum neutrophilum (strain DSM 2338 / JCM 9278 / NBRC 100436 / V24Sta) (Thermoproteus neutrophilus).